A 478-amino-acid chain; its full sequence is Ribulose bisphosphate carboxylase large chain (478 aa).

A propeptide spanning residues 1–2 (MS) is cleaved from the precursor. The substrate site is built by Asn-123 and Thr-173. Lys-175 serves as the catalytic Proton acceptor. Residue Lys-177 coordinates substrate. Residues Lys-201, Asp-203, and Glu-204 each coordinate Mg(2+). Lys-201 bears the N6-carboxylysine mark. Ser-208 is modified (phosphoserine). His-294 (proton acceptor) is an active-site residue. The substrate site is built by Arg-295 and His-327. A Phosphothreonine modification is found at Thr-330. Ser-379 lines the substrate pocket.

This sequence belongs to the RuBisCO large chain family. Type I subfamily. In terms of assembly, heterohexadecamer of 8 large chains and 8 small chains; disulfide-linked. The disulfide link is formed within the large subunit homodimers. Mg(2+) serves as cofactor. In terms of processing, the disulfide bond which can form in the large chain dimeric partners within the hexadecamer appears to be associated with oxidative stress and protein turnover.

The protein localises to the plastid. It is found in the chloroplast. It catalyses the reaction 2 (2R)-3-phosphoglycerate + 2 H(+) = D-ribulose 1,5-bisphosphate + CO2 + H2O. It carries out the reaction D-ribulose 1,5-bisphosphate + O2 = 2-phosphoglycolate + (2R)-3-phosphoglycerate + 2 H(+). In terms of biological role, ruBisCO catalyzes two reactions: the carboxylation of D-ribulose 1,5-bisphosphate, the primary event in carbon dioxide fixation, as well as the oxidative fragmentation of the pentose substrate in the photorespiration process. Both reactions occur simultaneously and in competition at the same active site. This is Ribulose bisphosphate carboxylase large chain from Lepidium virginicum (Virginia pepperweed).